Consider the following 644-residue polypeptide: 3D-(3,5/4)-trihydroxycyclohexane-1,2-dione hydrolase (644 aa).

Glu65 lines the thiamine diphosphate pocket. The tract at residues 442–522 (SLPGDLQRMW…INVLLFDNSG (81 aa)) is thiamine pyrophosphate binding. Mg(2+)-binding residues include Asp493 and Asn520.

Belongs to the TPP enzyme family. Mg(2+) serves as cofactor. Requires thiamine diphosphate as cofactor.

It catalyses the reaction 3D-3,5/4-trihydroxycyclohexane-1,2-dione + H2O = 5-deoxy-D-glucuronate + H(+). It participates in polyol metabolism; myo-inositol degradation into acetyl-CoA; acetyl-CoA from myo-inositol: step 3/7. Involved in the cleavage of the C1-C2 bond of 3D-(3,5/4)-trihydroxycyclohexane-1,2-dione (THcHDO) to yield 5-deoxy-glucuronate (5DG). The polypeptide is 3D-(3,5/4)-trihydroxycyclohexane-1,2-dione hydrolase (Bacillus thuringiensis (strain Al Hakam)).